The following is a 726-amino-acid chain: MKKKNLITAALPYVNNIPHLGNLVQVLSADAFARYSRMMDIDTLYVCGTDEYGTATETKALIEKTTPEELCNRYYAIHKSIYEWFNIKFDIFGRTTNKSHKQTVQDLFLKLEKNGYITDKESEQFFCQQDQMFLADRYVTGECPNCGNNAKGDQCENCSKLLAPIDLINPKCIICKNIPIIKTTKHLYINLPKIKNELIHWMQTTEHNTNWNTNAIKTTNAFLRDGLKERAITRDLKWGIPVPKKEYENKVFYVWFDAPIGYISITKEISKDWESWWKNNKETNLVQFIGKDNILFHTVIFPAIKLGSKENWTMLGKLASSEYLNYEHLKFSKSAGIGIFGNDVITTGISADIWRFYIYYNRPEKSDFQFMWDDFMERINSELIGNFSNLVNRVLTFYKKFFGDKIDTIEIKEDFWKEINLKYDKTLNFFKQIELKSALKEILDISRIGNKIFQDKEPWKTKDSTPKKTKELLLNLIYLIRDLSILISPFIPHTSDKIRRFFGESYEISNKFLGTNLGLNTIQFTEVLFTKLEKELIDSLKLKYSGGKNMQDEQTENPINLFSEKVCLKVVQIKTIERNPDAEKLFILKLDDGTPDGKQIVSSLADYYKEEKLIGKHIIIVDNLKPAKFRGIKSEGMLIATEDENKNFKVIIVEDFKDNPIPGERIILESDSDKKLKLPSKISIDKFLKTQIVAENGELKVNGINLILEHSKEKILSREIPNGKVY.

Positions 12-22 (PYVNNIPHLGN) match the 'HIGH' region motif. Zn(2+) is bound by residues cysteine 143, cysteine 146, cysteine 155, and cysteine 158. The short motif at 330-334 (KFSKS) is the 'KMSKS' region element. Lysine 333 is a binding site for ATP. A tRNA-binding domain is found at 562–667 (FSEKVCLKVV…DNPIPGERII (106 aa)).

This sequence belongs to the class-I aminoacyl-tRNA synthetase family. MetG type 1 subfamily. As to quaternary structure, homodimer. Requires Zn(2+) as cofactor.

It localises to the cytoplasm. It catalyses the reaction tRNA(Met) + L-methionine + ATP = L-methionyl-tRNA(Met) + AMP + diphosphate. In terms of biological role, is required not only for elongation of protein synthesis but also for the initiation of all mRNA translation through initiator tRNA(fMet) aminoacylation. This Borrelia turicatae (strain 91E135) protein is Methionine--tRNA ligase.